The following is an 82-amino-acid chain: UPF0154 protein SPD_1662 (82 aa).

The helical transmembrane segment at 5 to 25 threads the bilayer; the sequence is LAIVLIVLAFLGGALGGMYLV.

This sequence belongs to the UPF0154 family.

The protein resides in the cell membrane. This is UPF0154 protein SPD_1662 from Streptococcus pneumoniae serotype 2 (strain D39 / NCTC 7466).